The sequence spans 565 residues: MAQRIFTLILLLCSTSVFAGLFDAPGRSQFVPADQAFAFDFQQNQHDLNLTWQIKDGYYLYRKQIRITPEHAKIADVQLPQGVWHEDEFYGKSEIYRDRLTLPVTINQASAGATLTVTYQGCADAGFCYPPETKTVPLSEVVANNEASQPVSVPQQEQPTAQLPFSALWALLIGIGIAFTPCVLPMYPLISGIVLGGKQRLSTARALLLTFIYVQGMALTYTALGLVVAAAGLQFQAALQHPYVLIGLAIVFTLLAMSMFGLFTLQLPSSLQTRLTLMSNRQQGGSPGGVFIMGAIAGLICSPCTTAPLSAILLYIAQSGNMWLGGGTLYLYALGMGLPLMLITVFGNRLLPKSGPWMEQVKTAFGFVILALPVFLLERVIGDIWGLRLWSALGVAFFGWAFITSLQAKRGWMRVVQIILLAAALVSVRPLQDWAFGATHTAQTQTHLNFTQIKTVDELNQALVEAKGKPVMLDLYADWCVACKEFEKYTFSDPQVQKALADTVLLQANVTANDAQDMALLKHLNVLGLPTILFFDGQGQEHPQARVTGFMDAETFSAHLRDRQP.

The signal sequence occupies residues 1-19; it reads MAQRIFTLILLLCSTSVFA. 2 cysteine pairs are disulfide-bonded: Cys122–Cys128 and Cys182–Cys304. 7 consecutive transmembrane segments (helical) span residues 163 to 183, 208 to 228, 243 to 263, 289 to 309, 323 to 343, 357 to 377, and 384 to 404; these read LPFS…TPCV, LLTF…GLVV, YVLI…FGLF, GVFI…TAPL, WLGG…LMLI, WMEQ…VFLL, and IWGL…AFIT. The 132-residue stretch at 434 to 565 folds into the Thioredoxin domain; that stretch reads WAFGATHTAQ…FSAHLRDRQP (132 aa). Cys480 and Cys483 form a disulfide bridge.

This sequence belongs to the thioredoxin family. DsbD subfamily.

The protein resides in the cell inner membrane. It carries out the reaction [protein]-dithiol + NAD(+) = [protein]-disulfide + NADH + H(+). The enzyme catalyses [protein]-dithiol + NADP(+) = [protein]-disulfide + NADPH + H(+). Its function is as follows. Required to facilitate the formation of correct disulfide bonds in some periplasmic proteins and for the assembly of the periplasmic c-type cytochromes. Acts by transferring electrons from cytoplasmic thioredoxin to the periplasm. This transfer involves a cascade of disulfide bond formation and reduction steps. In Escherichia coli O6:H1 (strain CFT073 / ATCC 700928 / UPEC), this protein is Thiol:disulfide interchange protein DsbD.